A 147-amino-acid polypeptide reads, in one-letter code: Hemoglobin subunit epsilon-2 (147 aa).

In terms of domain architecture, Globin spans 3–147 (HFTTEENVAV…VANALTHKYH (145 aa)). Heme b is bound by residues Tyr-64 and His-93.

This sequence belongs to the globin family. As to expression, red blood cells.

In terms of biological role, hemoglobin epsilon chain is a beta-type chain found in early embryos. This chain is Hemoglobin subunit epsilon-2 (HBE2), found in Bos taurus (Bovine).